The chain runs to 300 residues: Estradiol 17-beta-dehydrogenase 11 (300 aa).

A signal peptide spans 1 to 19 (MKFLLDILLLLPLLIVCSL). Residue 40 to 64 (LITGAGHGIGRLTAYEFAKLKSKLV) coordinates NADP(+). Ser-172 is a binding site for substrate. Tyr-185 serves as the catalytic Proton acceptor.

This sequence belongs to the short-chain dehydrogenases/reductases (SDR) family. 17-beta-HSD 3 subfamily. As to expression, present at high level in steroidogenic cells such as syncytiotrophoblasts, sebaceous gland, Leydig cells, and granulosa cells of the dominant follicle and corpus luteum. In lung, it is detected in the ciliated epithelium and in acini of adult trachea, in bronchioles, but not in alveoli. In the eye, it is detected in the nonpigmented epithelium of the ciliary body and, at lower level, in the inner nuclear layer of the retina (at protein level). Widely expressed. Highly expressed in retina, pancreas, kidney, liver, lung, adrenal, small intestine, ovary and heart.

The protein localises to the endoplasmic reticulum. Its subcellular location is the lipid droplet. The catalysed reaction is 17beta-estradiol + NAD(+) = estrone + NADH + H(+). The enzyme catalyses 17beta-estradiol + NADP(+) = estrone + NADPH + H(+). In terms of biological role, can convert androstan-3-alpha,17-beta-diol (3-alpha-diol) to androsterone in vitro, suggesting that it may participate in androgen metabolism during steroidogenesis. May act by metabolizing compounds that stimulate steroid synthesis and/or by generating metabolites that inhibit it. Has no activity toward DHEA (dehydroepiandrosterone), or A-dione (4-androste-3,17-dione), and only a slight activity toward testosterone to A-dione. Tumor-associated antigen in cutaneous T-cell lymphoma. This is Estradiol 17-beta-dehydrogenase 11 (HSD17B11) from Homo sapiens (Human).